The chain runs to 444 residues: Xylose isomerase (444 aa).

Catalysis depends on residues H101 and D104. Mg(2+) contacts are provided by E232, E268, H271, D296, D307, D309, and D339.

The protein belongs to the xylose isomerase family. In terms of assembly, homotetramer. The cofactor is Mg(2+).

The protein resides in the cytoplasm. The enzyme catalyses alpha-D-xylose = alpha-D-xylulofuranose. This Thermotoga maritima (strain ATCC 43589 / DSM 3109 / JCM 10099 / NBRC 100826 / MSB8) protein is Xylose isomerase.